Consider the following 407-residue polypeptide: Elongation factor Tu (407 aa).

The region spanning 10 to 217 (KPHVNVGTIG…ALDSYIPEPE (208 aa)) is the tr-type G domain. Residues 19–26 (GHVDHGKT) form a G1 region. 19-26 (GHVDHGKT) lines the GTP pocket. Thr-26 serves as a coordination point for Mg(2+). A G2 region spans residues 60-64 (GITIA). Positions 81-84 (DCPG) are G3. GTP-binding positions include 81-85 (DCPGH) and 136-139 (NKAD). Positions 136–139 (NKAD) are G4. Residues 184–186 (SAL) are G5.

Belongs to the TRAFAC class translation factor GTPase superfamily. Classic translation factor GTPase family. EF-Tu/EF-1A subfamily. As to quaternary structure, monomer.

The protein localises to the cytoplasm. The enzyme catalyses GTP + H2O = GDP + phosphate + H(+). Functionally, GTP hydrolase that promotes the GTP-dependent binding of aminoacyl-tRNA to the A-site of ribosomes during protein biosynthesis. The chain is Elongation factor Tu from Saccharophagus degradans (strain 2-40 / ATCC 43961 / DSM 17024).